The following is a 79-amino-acid chain: Small ribosomal subunit protein uS17 (79 aa).

Belongs to the universal ribosomal protein uS17 family. As to quaternary structure, part of the 30S ribosomal subunit.

Its function is as follows. One of the primary rRNA binding proteins, it binds specifically to the 5'-end of 16S ribosomal RNA. This Rhizobium etli (strain ATCC 51251 / DSM 11541 / JCM 21823 / NBRC 15573 / CFN 42) protein is Small ribosomal subunit protein uS17.